Reading from the N-terminus, the 610-residue chain is Preterminal protein (610 aa).

Residues 288–379 (TLRSGTQTGL…ESFSDDVGLS (92 aa)) form a disordered region. Positions 328–337 (SLPIRRRRRR) match the Nuclear localization signal motif. The span at 331-340 (IRRRRRRGTR) shows a compositional bias: basic residues. Positions 341–350 (RQVEREDSVR) are enriched in basic and acidic residues. At S549 the chain carries O-(5'-phospho-DNA)-serine.

It belongs to the adenoviridae terminal protein family. In terms of assembly, heterodimer with the polymerase; this heterodimer binds to bp 9 to 18 of the genome. Interacts with host POU2F1; POU2F1 binds to the auxiliary sequences in the inverted terminal repeats and tethers the pTP-POL heterodimer to the origin DNA thereby participating in the assembly of the pre-initiation complex (POL-TP-DBP-NFIA-POU2F1). Post-translationally, preterminal protein is used to replicate viral genome, upon genomic encapsidation it is processed first into iTP and finally into TP by adenovirus protease.

The protein resides in the host nucleus matrix. Protein covalently bound to the viral DNA that acts as a primer for viral genomic replication by DNA strand displacement. Assembles on the viral origin of replication in an initiation complex with viral polymerase, DBP, host NFIA and host POU2F1/OCT1. During initiation, the polymerase covalently couples the first dCTP with Ser-580 of pTP. The terminal protein stimulates the template activity over 20 fold compared to protein-free templates. Neo-synthesized viral genomes are linked to two preterminal proteins, one for each 5' end. These new genomes are encapsidated in the nucleus, and during capsid maturation by viral protease, preterminal protein is first cleaved into intermediary (iTP), then into mature TP. May play a role in host nuclear matrix localization of genomic DNA. In Snake adenovirus serotype 1 (SnAdV-1), this protein is Preterminal protein.